We begin with the raw amino-acid sequence, 85 residues long: DNA-directed RNA polymerase subunit omega (85 aa).

The protein belongs to the RNA polymerase subunit omega family. As to quaternary structure, the RNAP catalytic core consists of 2 alpha, 1 beta, 1 beta' and 1 omega subunit. When a sigma factor is associated with the core the holoenzyme is formed, which can initiate transcription.

It carries out the reaction RNA(n) + a ribonucleoside 5'-triphosphate = RNA(n+1) + diphosphate. Its function is as follows. Promotes RNA polymerase assembly. Latches the N- and C-terminal regions of the beta' subunit thereby facilitating its interaction with the beta and alpha subunits. The protein is DNA-directed RNA polymerase subunit omega of Tropheryma whipplei (strain TW08/27) (Whipple's bacillus).